Reading from the N-terminus, the 2073-residue chain is Dedicator of cytokinesis protein 11 (2073 aa).

Ser12 carries the phosphoserine modification. Position 16 is a phosphothreonine (Thr16). Residues Ser23 and Ser161 each carry the phosphoserine modification. The PH domain occupies 165-272 (GVIKQGWLHK…WLITLKKIIQ (108 aa)). Tyr248 carries the post-translational modification Phosphotyrosine. Ser306, Ser440, and Ser445 each carry phosphoserine. The C2 DOCK-type domain maps to 640–818 (KNHLYVYPLQ…PLLKIKSHLE (179 aa)). The segment at 1226–1267 (FQNGHGIKREDSRGSLIPEGATGFPDQGNTGENTRQSSTRSS) is disordered. Ser1237 and Ser1240 each carry phosphoserine. Positions 1609–2036 (KSYASTPELR…LSDIIHEQIL (428 aa)) constitute a DOCKER domain.

Belongs to the DOCK family. Interacts with CDC42.

Functionally, guanine nucleotide-exchange factor (GEF) that activates CDC42 by exchanging bound GDP for free GTP. Required for marginal zone (MZ) B-cell development, is associated with early bone marrow B-cell development, MZ B-cell formation, MZ B-cell number and marginal metallophilic macrophages morphology. Facilitates filopodia formation through the activation of CDC42. This chain is Dedicator of cytokinesis protein 11, found in Homo sapiens (Human).